A 138-amino-acid polypeptide reads, in one-letter code: MLQSNRFAIYAIGKIKKHWIRDGINQYKKRMPELIINELKTFNLNNLRSNNNIIIVLSEEGKQFNSIELCSLLLNFKNKKINFLIGDTDGISSDIKENSDLILSLSPLTFPHELARLILIEQIYRAVSISSNSPYHRS.

S-adenosyl-L-methionine is bound by residues Gly86 and Leu105 to Phe110.

This sequence belongs to the RNA methyltransferase RlmH family. Homodimer.

It is found in the cytoplasm. The catalysed reaction is pseudouridine(1915) in 23S rRNA + S-adenosyl-L-methionine = N(3)-methylpseudouridine(1915) in 23S rRNA + S-adenosyl-L-homocysteine + H(+). In terms of biological role, specifically methylates the pseudouridine at position 1915 (m3Psi1915) in 23S rRNA. The polypeptide is Ribosomal RNA large subunit methyltransferase H (Prochlorococcus marinus (strain MIT 9215)).